The following is a 126-amino-acid chain: Adrenocorticotropic hormone receptor (126 aa).

The chain crosses the membrane as a helical span at residues 1 to 25 (VLPEEIFFTISIVGVLENLIVLLAV). Residues 26–34 (FKNKNLQAP) are Cytoplasmic-facing. A helical membrane pass occupies residues 35–55 (MYFFICSLAISDMLGSLYKIL). The Extracellular segment spans residues 56–80 (ENILIILRNMGYLKPRGSFETTADD). A helical membrane pass occupies residues 81–102 (IIDSLFVLSLLGAIFSLSVIAA). Topologically, residues 103 to 123 (DRYITIFHALRYHSIVTMRRT) are cytoplasmic. The chain crosses the membrane as a helical span at residues 124–126 (VVV).

Belongs to the G-protein coupled receptor 1 family. As to quaternary structure, interacts with MRAP; increasing ligand-sensitivity and generation of cAMP. Interacts with MRAP2; competing with MRAP for binding to MC2R and impairing the binding of corticotropin (ACTH).

The protein resides in the cell membrane. Its function is as follows. Receptor for corticotropin (ACTH). This receptor is mediated by G proteins (G(s)) which activate adenylate cyclase (cAMP). The chain is Adrenocorticotropic hormone receptor (MC2R) from Papio hamadryas (Hamadryas baboon).